The sequence spans 381 residues: Metacaspase-8 (381 aa).

Active-site residues include His86 and Cys140. At Cys140 the chain carries S-nitrosocysteine.

It belongs to the peptidase C14B family. In terms of processing, proteolytically processed; by an autocatalytic mechanism.

Its function is as follows. Cysteine protease that cleaves specifically after arginine residues. Does not cleave caspase-specific substrates. May be involved in the modulation of programmed cell death activated by oxidative stress. The protein is Metacaspase-8 (AMC8) of Arabidopsis thaliana (Mouse-ear cress).